The chain runs to 2133 residues: Coagulation factor VIII (2133 aa).

The N-terminal stretch at 1-19 (MQLELSTCVFLCLLPLGFS) is a signal peptide. 4 consecutive Plastocyanin-like domains span residues 20–199 (AIRR…LLVC), 207–357 (ERTQ…QLRR), 399–573 (KTWV…LLIC), and 583–730 (NQMM…VYSC). 2 consecutive F5/8 type A domains span residues 20-357 (AIRR…QLRR) and 399-730 (KTWV…VYSC). Residues cysteine 173 and cysteine 199 are joined by a disulfide bond. N-linked (GlcNAc...) asparagine glycosylation is found at asparagine 233 and asparagine 259. A disulfide bridge links cysteine 547 with cysteine 573. N-linked (GlcNAc...) asparagine glycosylation is present at asparagine 601. Tyrosine 737, tyrosine 738, and tyrosine 742 each carry sulfotyrosine. Disordered regions lie at residues 760-790 (SFAQ…LDPQ) and 804-914 (PSGD…PHPQ). Positions 760–1599 (SFAQNSRPPS…LISYPDDQEQ (840 aa)) are b. Positions 761-780 (FAQNSRPPSASQKQFQTITS) are enriched in polar residues. Basic and acidic residues-rich tracts occupy residues 853–862 (LRPELHHSAE) and 868–878 (EPEKELKKLDS). The segment covering 879–888 (KMSSSSDLLK) has biased composition (low complexity). A compositionally biased stretch (polar residues) spans 889 to 900 (TSPTIPSDTLSA). N-linked (GlcNAc...) asparagine glycans are attached at residues asparagine 929, asparagine 985, and asparagine 1025. A disordered region spans residues 1042–1078 (LGKNPLSSERGPSPELLTSSGSGKSVKGQSSGQGRIR). Residues 1060–1075 (SSGSGKSVKGQSSGQG) are compositionally biased toward low complexity. Asparagine 1111 carries an N-linked (GlcNAc...) asparagine glycan. The segment at 1160–1179 (PSVEGFDGGSHAPVPQDSRS) is disordered. Asparagine 1181, asparagine 1208, asparagine 1245, asparagine 1265, and asparagine 1335 each carry an N-linked (GlcNAc...) asparagine glycan. Positions 1200 to 1221 (EAPLEAPGNRTGPGPRSAVPRR) are disordered. Disordered regions lie at residues 1358 to 1391 (LNKV…KSTA) and 1406 to 1441 (ESNH…APKP). Residues 1378 to 1387 (KEWESLEKSP) show a composition bias toward basic and acidic residues. 2 N-linked (GlcNAc...) asparagine glycosylation sites follow: asparagine 1408 and asparagine 1611. Plastocyanin-like domains are found at residues 1495–1659 (RTRH…LLIC) and 1669–1822 (GRQV…SKEC). The 328-residue stretch at 1495 to 1822 (RTRHYFIAAV…TTFLVYSKEC (328 aa)) folds into the F5/8 type A 3 domain. 3 disulfide bridges follow: cysteine 1633-cysteine 1659, cysteine 1822-cysteine 1970, and cysteine 1975-cysteine 2127. F5/8 type C domains are found at residues 1822 to 1970 (CQAP…LMGC) and 1975 to 2127 (CSMP…VLGC). A glycan (N-linked (GlcNAc...) asparagine) is linked at asparagine 1919.

The protein belongs to the multicopper oxidase family. Interacts with vWF. vWF binding is essential for the stabilization of F8 in circulation. Proteolytically cleaved by cathepsin CTSG to produce a partially activated form.

Its subcellular location is the secreted. It is found in the extracellular space. Functionally, factor VIII, along with calcium and phospholipid, acts as a cofactor for factor IXa when it converts factor X to the activated form, factor Xa. The polypeptide is Coagulation factor VIII (F8) (Sus scrofa (Pig)).